Consider the following 344-residue polypeptide: Protein PopA1 (344 aa).

Disordered regions lie at residues 1 to 28 (MSVGNIQSPSNLPGLQNLNLNTNTNSQQ), 58 to 108 (SAGG…DANN), 134 to 156 (QPGGNDKGNGVGGANGAKGAGGQ), 211 to 242 (GNGVNGNQANGPQNAGDVNGANGADDGSEDQG), and 268 to 311 (GGGN…NLQS). Composition is skewed to low complexity over residues 8-28 (SPSNLPGLQNLNLNTNTNSQQ) and 65-83 (NTGNAPAKDGNANAGANDP). The segment covering 89–108 (SKSQGPQSANKTGNVDDANN) has biased composition (polar residues). Residues 138–156 (NDKGNGVGGANGAKGAGGQ) are compositionally biased toward gly residues. Residues 215-235 (NGNQANGPQNAGDVNGANGAD) are compositionally biased toward low complexity. The span at 268 to 279 (GGGNQAQGGSKG) shows a compositional bias: gly residues. The segment covering 280–294 (AGNASPASGANPGAN) has biased composition (low complexity). Polar residues predominate over residues 295 to 311 (QPGSADDQSSGQNNLQS).

Post-translationally, popA2 and PopA3 are produced from PopA1.

The protein resides in the secreted. Acts as a specific hypersensitive response (HR) elicitor. Has activity on tobacco (non-host plant) and petunia but is without activity on tomato (host plant); PopA3 seems to be more active than a PopA1-PopA2 mixture. The polypeptide is Protein PopA1 (popA) (Ralstonia nicotianae (strain ATCC BAA-1114 / GMI1000) (Ralstonia solanacearum)).